The following is a 476-amino-acid chain: tRNA sulfurtransferase (476 aa).

Residues 54–156 (AENDIPLSKV…GKDALIYDKI (103 aa)) form the THUMP domain. Residues 174–175 (MV), Lys256, Gly278, and Gln287 each bind ATP. Residues Cys334 and Cys433 are joined by a disulfide bond. In terms of domain architecture, Rhodanese spans 388–470 (NLEDAVFIDL…LSKQKGSVDE (83 aa)). Cys433 (cysteine persulfide intermediate) is an active-site residue.

The protein belongs to the ThiI family.

Its subcellular location is the cytoplasm. The enzyme catalyses [ThiI sulfur-carrier protein]-S-sulfanyl-L-cysteine + a uridine in tRNA + 2 reduced [2Fe-2S]-[ferredoxin] + ATP + H(+) = [ThiI sulfur-carrier protein]-L-cysteine + a 4-thiouridine in tRNA + 2 oxidized [2Fe-2S]-[ferredoxin] + AMP + diphosphate. The catalysed reaction is [ThiS sulfur-carrier protein]-C-terminal Gly-Gly-AMP + S-sulfanyl-L-cysteinyl-[cysteine desulfurase] + AH2 = [ThiS sulfur-carrier protein]-C-terminal-Gly-aminoethanethioate + L-cysteinyl-[cysteine desulfurase] + A + AMP + 2 H(+). It participates in cofactor biosynthesis; thiamine diphosphate biosynthesis. In terms of biological role, catalyzes the ATP-dependent transfer of a sulfur to tRNA to produce 4-thiouridine in position 8 of tRNAs, which functions as a near-UV photosensor. Also catalyzes the transfer of sulfur to the sulfur carrier protein ThiS, forming ThiS-thiocarboxylate. This is a step in the synthesis of thiazole, in the thiamine biosynthesis pathway. The sulfur is donated as persulfide by IscS. The chain is tRNA sulfurtransferase from Thermoplasma volcanium (strain ATCC 51530 / DSM 4299 / JCM 9571 / NBRC 15438 / GSS1).